An 83-amino-acid polypeptide reads, in one-letter code: Cytochrome b559 subunit alpha (83 aa).

The helical transmembrane segment at 21–35 threads the bilayer; sequence VIHSITIPSLFIAGW. Histidine 23 is a heme binding site.

Belongs to the PsbE/PsbF family. In terms of assembly, heterodimer of an alpha subunit and a beta subunit. PSII is composed of 1 copy each of membrane proteins PsbA, PsbB, PsbC, PsbD, PsbE, PsbF, PsbH, PsbI, PsbJ, PsbK, PsbL, PsbM, PsbT, PsbX, PsbY, PsbZ, Psb30/Ycf12, at least 3 peripheral proteins of the oxygen-evolving complex and a large number of cofactors. It forms dimeric complexes. Heme b serves as cofactor.

It is found in the plastid. It localises to the chloroplast thylakoid membrane. This b-type cytochrome is tightly associated with the reaction center of photosystem II (PSII). PSII is a light-driven water:plastoquinone oxidoreductase that uses light energy to abstract electrons from H(2)O, generating O(2) and a proton gradient subsequently used for ATP formation. It consists of a core antenna complex that captures photons, and an electron transfer chain that converts photonic excitation into a charge separation. The protein is Cytochrome b559 subunit alpha of Daucus carota (Wild carrot).